Reading from the N-terminus, the 382-residue chain is Cysteine desulfurase IscS 1 (382 aa).

Asn-149 lines the pyridoxal 5'-phosphate pocket. The Cysteine persulfide intermediate role is filled by Cys-321. Residue Cys-321 coordinates [2Fe-2S] cluster.

The protein belongs to the class-V pyridoxal-phosphate-dependent aminotransferase family. NifS/IscS subfamily. In terms of assembly, homodimer. Forms a heterotetramer with IscU, interacts with other sulfur acceptors. Pyridoxal 5'-phosphate is required as a cofactor.

The protein resides in the cytoplasm. It catalyses the reaction (sulfur carrier)-H + L-cysteine = (sulfur carrier)-SH + L-alanine. The protein operates within cofactor biosynthesis; iron-sulfur cluster biosynthesis. Master enzyme that delivers sulfur to a number of partners involved in Fe-S cluster assembly, tRNA modification or cofactor biosynthesis. Catalyzes the removal of elemental sulfur atoms from cysteine to produce alanine. Functions as a sulfur delivery protein for Fe-S cluster synthesis onto IscU, an Fe-S scaffold assembly protein, as well as other S acceptor proteins. The protein is Cysteine desulfurase IscS 1 of Archaeoglobus fulgidus (strain ATCC 49558 / DSM 4304 / JCM 9628 / NBRC 100126 / VC-16).